Consider the following 260-residue polypeptide: MVLIRVLANLLILQLSYAQKSSELIIGGDECNINEHRFLVALYTFRSRRFHCSGTLINQEWVLSAARCDRKNIRIKLGMHSTNVTNEDVQTRVPKEKFFCLSSKTYTKWNKDIMLIRLKRPVNNSTHIAPVSLPSNPPSLGSVCRVMGWGTISATKETHPDVPHCANINILDYSVCRAAYARLPATSRTLCAGILEGGKDTCHGDSGGPLICNGQVQGIVSWGGHPCGLPRKPGLYTKVFDHLDWIKSIIAGNKDATCPP.

The N-terminal stretch at Met1–Ala18 is a signal peptide. Residues Gln19–Leu24 constitute a propeptide that is removed on maturation. The Peptidase S1 domain occupies Ile25 to Ala251. Intrachain disulfides connect Cys31–Cys165, Cys52–Cys68, Cys100–Cys258, Cys144–Cys212, Cys176–Cys191, and Cys202–Cys227. N-linked (GlcNAc...) asparagine glycans are attached at residues Asn83, Asn123, and Asn124.

This sequence belongs to the peptidase S1 family. Snake venom subfamily. Expressed by the venom gland.

The protein localises to the secreted. Functionally, snake venom serine protease homolog that may act in the hemostasis system of the prey. The chain is Snake venom serine protease homolog 1 from Trimeresurus stejnegeri (Chinese green tree viper).